A 489-amino-acid polypeptide reads, in one-letter code: Probable transporter MCH1 (489 aa).

Helical transmembrane passes span isoleucine 30–leucine 50, methionine 68–alanine 88, and glycine 92–alanine 112. N-linked (GlcNAc...) asparagine glycosylation occurs at asparagine 123. The next 8 membrane-spanning stretches (helical) occupy residues threonine 132–isoleucine 152, leucine 163–phenylalanine 183, valine 202–serine 222, valine 279–alanine 299, valine 307–threonine 327, tryptophan 351–serine 371, phenylalanine 388–isoleucine 408, and alanine 421–alanine 441. A glycan (N-linked (GlcNAc...) asparagine) is linked at asparagine 450. The helical transmembrane segment at glutamate 462–tryptophan 482 threads the bilayer.

This sequence belongs to the major facilitator superfamily.

The protein resides in the vacuole membrane. In terms of biological role, probable transporter. The polypeptide is Probable transporter MCH1 (MCH1) (Candida glabrata (strain ATCC 2001 / BCRC 20586 / JCM 3761 / NBRC 0622 / NRRL Y-65 / CBS 138) (Yeast)).